A 491-amino-acid chain; its full sequence is Probable malate:quinone oxidoreductase (491 aa).

It belongs to the MQO family. It depends on FAD as a cofactor.

The catalysed reaction is (S)-malate + a quinone = a quinol + oxaloacetate. The protein operates within carbohydrate metabolism; tricarboxylic acid cycle; oxaloacetate from (S)-malate (quinone route): step 1/1. The protein is Probable malate:quinone oxidoreductase of Leifsonia xyli subsp. xyli (strain CTCB07).